Reading from the N-terminus, the 139-residue chain is Invertebrate-type lysozyme 3 (139 aa).

An N-terminal signal peptide occupies residues 1–18 (MFVKSLVFLTIAVAYASA). The I-type lysozyme domain maps to 19–138 (DCLHCICMRE…WNGIKSCCGC (120 aa)). 7 disulfides stabilise this stretch: Cys20/Cys106, Cys23/Cys138, Cys25/Cys31, Cys36/Cys45, Cys58/Cys86, Cys76/Cys82, and Cys98/Cys120. Glu28 acts as the Proton donor in catalysis. Catalysis depends on Asp39, which acts as the Nucleophile. 51–57 (KLPYYED) is a substrate binding site. Substrate contacts are provided by residues Tyr90 and 113-115 (HNG).

Belongs to the glycosyl hydrolase 22 family. Type-I lysozyme subfamily. In terms of tissue distribution, expressed in pharynx grinder muscle pm7, isthmus marginal cell mc2 and pharyngeal muscle cell pm5, intestinal cells and at lower levels in coelomocytes and epidermis. Expressed at low levels in intestine.

It is found in the late endosome lumen. The protein localises to the recycling endosome lumen. It localises to the lysosome lumen. The protein resides in the secreted. The enzyme catalyses Hydrolysis of (1-&gt;4)-beta-linkages between N-acetylmuramic acid and N-acetyl-D-glucosamine residues in a peptidoglycan and between N-acetyl-D-glucosamine residues in chitodextrins.. Its function is as follows. Has bacteriolytic activity against Gram-positive bacteria. Plays a role in defense against bacterial pathogens. Involved in pharyngeal grinder function by enabling proper lysis of ingested bacteria. This Caenorhabditis elegans protein is Invertebrate-type lysozyme 3.